The primary structure comprises 165 residues: 3-hydroxyacyl-[acyl-carrier-protein] dehydratase FabZ (165 aa).

Residue H64 is part of the active site.

This sequence belongs to the thioester dehydratase family. FabZ subfamily.

It is found in the cytoplasm. It catalyses the reaction a (3R)-hydroxyacyl-[ACP] = a (2E)-enoyl-[ACP] + H2O. Functionally, involved in unsaturated fatty acids biosynthesis. Catalyzes the dehydration of short chain beta-hydroxyacyl-ACPs and long chain saturated and unsaturated beta-hydroxyacyl-ACPs. The protein is 3-hydroxyacyl-[acyl-carrier-protein] dehydratase FabZ of Acidiphilium cryptum (strain JF-5).